Reading from the N-terminus, the 50-residue chain is U37-theraphotoxin-Cg1a (50 aa).

The first 19 residues, 1–19 (MRVLLIIAGLALLSVVCYT), serve as a signal peptide directing secretion.

Belongs to the neurotoxin 10 (Hwtx-1) family. 67 (Jztx-67) subfamily. As to expression, expressed by the venom gland.

Its subcellular location is the secreted. The sequence is that of U37-theraphotoxin-Cg1a from Chilobrachys guangxiensis (Chinese earth tiger tarantula).